Reading from the N-terminus, the 332-residue chain is Ketol-acid reductoisomerase (NADP(+)) (332 aa).

In terms of domain architecture, KARI N-terminal Rossmann spans 1 to 182 (MAVIYYDKDC…GSNRAGVLET (182 aa)). Residues 25–28 (YGAQ) and 83–86 (DTSQ) contribute to the NADP(+) site. The active site involves H108. G134 is an NADP(+) binding site. Residues 183–328 (TFAEETETDL…AELRSMMSWL (146 aa)) enclose the KARI C-terminal knotted domain. Mg(2+) is bound by residues D191, E195, E227, and E231. A substrate-binding site is contributed by S252.

Belongs to the ketol-acid reductoisomerase family. Mg(2+) serves as cofactor.

The enzyme catalyses (2R)-2,3-dihydroxy-3-methylbutanoate + NADP(+) = (2S)-2-acetolactate + NADPH + H(+). The catalysed reaction is (2R,3R)-2,3-dihydroxy-3-methylpentanoate + NADP(+) = (S)-2-ethyl-2-hydroxy-3-oxobutanoate + NADPH + H(+). It participates in amino-acid biosynthesis; L-isoleucine biosynthesis; L-isoleucine from 2-oxobutanoate: step 2/4. Its pathway is amino-acid biosynthesis; L-valine biosynthesis; L-valine from pyruvate: step 2/4. Its function is as follows. Involved in the biosynthesis of branched-chain amino acids (BCAA). Catalyzes an alkyl-migration followed by a ketol-acid reduction of (S)-2-acetolactate (S2AL) to yield (R)-2,3-dihydroxy-isovalerate. In the isomerase reaction, S2AL is rearranged via a Mg-dependent methyl migration to produce 3-hydroxy-3-methyl-2-ketobutyrate (HMKB). In the reductase reaction, this 2-ketoacid undergoes a metal-dependent reduction by NADPH to yield (R)-2,3-dihydroxy-isovalerate. This is Ketol-acid reductoisomerase (NADP(+)) from Dehalococcoides mccartyi (strain ATCC BAA-2266 / KCTC 15142 / 195) (Dehalococcoides ethenogenes (strain 195)).